Consider the following 358-residue polypeptide: CX3C chemokine receptor 1 (358 aa).

Topologically, residues 1–26 are extracellular; sequence MHTTLPESTSENFEYYDLAEACDMGD. A helical membrane pass occupies residues 27 to 47; it reads IVALGTVFVVILYSLVFAFGL. The Cytoplasmic portion of the chain corresponds to 48 to 68; it reads VGNLLVVFALINSQRSKSITD. Residues 69 to 89 form a helical membrane-spanning segment; the sequence is IYLLNLALSDLLFVATLPFWT. The Extracellular portion of the chain corresponds to 90 to 105; it reads HYVINEQGLHHATCKL. A disulfide bridge links C103 with C176. Residues 106–126 traverse the membrane as a helical segment; that stretch reads ITAFFFIGFFGGIFFITVISV. Residues 127–147 are Cytoplasmic-facing; the sequence is DRFLAIVLAANSMSNRTVQHG. Residues 148–168 traverse the membrane as a helical segment; that stretch reads VTTSLGVWAAAILVATPQFMF. The Extracellular portion of the chain corresponds to 169 to 186; it reads TREKENECFGDYPEILQE. The helical transmembrane segment at 187 to 207 threads the bilayer; the sequence is IWPVILNTEINFLGFLLPLLI. Topologically, residues 208 to 232 are cytoplasmic; sequence MSYCYFRIMQTLFSCKNHKKAKAIR. Residues 233–253 traverse the membrane as a helical segment; the sequence is LIFLVVVVFFLFWTPYNVMIF. At 254–275 the chain is on the extracellular side; that stretch reads LQTLNLYDFFPKCDVKRDLKLA. A helical membrane pass occupies residues 276 to 296; that stretch reads ISVTETIAFSHCCLNPLIYAF. The Cytoplasmic segment spans residues 297–358; the sequence is AGEKFRRYLY…TSDGDASILL (62 aa). Phosphothreonine is present on T349.

This sequence belongs to the G-protein coupled receptor 1 family. As to quaternary structure, found in a ternary complex with CX3CL1 and ITGAV:ITGB3 or ITGA4:ITGB1. Post-translationally, this protein is not N-glycosylated which is unusual for G-protein-coupled receptors.

It localises to the cell membrane. Receptor for the C-X3-C chemokine fractalkine (CX3CL1) present on many early leukocyte cells; CX3CR1-CX3CL1 signaling exerts distinct functions in different tissue compartments, such as immune response, inflammation, cell adhesion and chemotaxis. CX3CR1-CX3CL1 signaling mediates cell migratory functions. Responsible for the recruitment of natural killer (NK) cells to inflamed tissues. Acts as a regulator of inflammation process leading to atherogenesis by mediating macrophage and monocyte recruitment to inflamed atherosclerotic plaques, promoting cell survival. Involved in airway inflammation by promoting interleukin 2-producing T helper (Th2) cell survival in inflamed lung. Involved in the migration of circulating monocytes to non-inflamed tissues, where they differentiate into macrophages and dendritic cells. Acts as a negative regulator of angiogenesis, probably by promoting macrophage chemotaxis. Plays a key role in brain microglia by regulating inflammatory response in the central nervous system (CNS) and regulating synapse maturation. Required to restrain the microglial inflammatory response in the CNS and the resulting parenchymal damage in response to pathological stimuli. Involved in brain development by participating in synaptic pruning, a natural process during which brain microglia eliminates extra synapses during postnatal development. Synaptic pruning by microglia is required to promote the maturation of circuit connectivity during brain development. Acts as an important regulator of the gut microbiota by controlling immunity to intestinal bacteria and fungi. Expressed in lamina propria dendritic cells in the small intestine, which form transepithelial dendrites capable of taking up bacteria in order to provide defense against pathogenic bacteria. Required to initiate innate and adaptive immune responses against dissemination of commensal fungi (mycobiota) component of the gut: expressed in mononuclear phagocytes (MNPs) and acts by promoting induction of antifungal IgG antibodies response to confer protection against disseminated C.albicans or C.auris infection. Also acts as a receptor for C-C motif chemokine CCL26, inducing cell chemotaxis. In Bos taurus (Bovine), this protein is CX3C chemokine receptor 1.